A 641-amino-acid chain; its full sequence is ATP-dependent zinc metalloprotease FtsH (641 aa).

Topologically, residues M1–Y16 are cytoplasmic. Residues L17 to M37 traverse the membrane as a helical segment. At A38–D131 the chain is on the extracellular side. The helical transmembrane segment at F132 to M152 threads the bilayer. The Cytoplasmic portion of the chain corresponds to F153–E641. G222–T229 provides a ligand contact to ATP. H444 is a Zn(2+) binding site. E445 is an active-site residue. H448 and D520 together coordinate Zn(2+).

This sequence in the central section; belongs to the AAA ATPase family. It in the C-terminal section; belongs to the peptidase M41 family. As to quaternary structure, homohexamer. Zn(2+) is required as a cofactor.

It is found in the cell membrane. Acts as a processive, ATP-dependent zinc metallopeptidase for both cytoplasmic and membrane proteins. Plays a role in the quality control of integral membrane proteins. This chain is ATP-dependent zinc metalloprotease FtsH, found in Acholeplasma laidlawii (strain PG-8A).